Here is a 225-residue protein sequence, read N- to C-terminus: ATP-dependent dethiobiotin synthetase BioD (225 aa).

13–18 (NVGKTL) contributes to the ATP binding site. Thr17 is a binding site for Mg(2+). The active site involves Lys38. Thr42 lines the substrate pocket. ATP contacts are provided by residues Asp55, 116 to 119 (EGAG), 176 to 177 (NH), and 205 to 207 (PWL). Mg(2+) is bound by residues Asp55 and Glu116.

Belongs to the dethiobiotin synthetase family. Homodimer. Mg(2+) is required as a cofactor.

It localises to the cytoplasm. It carries out the reaction (7R,8S)-7,8-diammoniononanoate + CO2 + ATP = (4R,5S)-dethiobiotin + ADP + phosphate + 3 H(+). The protein operates within cofactor biosynthesis; biotin biosynthesis; biotin from 7,8-diaminononanoate: step 1/2. Its function is as follows. Catalyzes a mechanistically unusual reaction, the ATP-dependent insertion of CO2 between the N7 and N8 nitrogen atoms of 7,8-diaminopelargonic acid (DAPA, also called 7,8-diammoniononanoate) to form a ureido ring. The protein is ATP-dependent dethiobiotin synthetase BioD of Baumannia cicadellinicola subsp. Homalodisca coagulata.